Here is a 230-residue protein sequence, read N- to C-terminus: MSIDLNEITALMQLASPALPIGGYSYSQGLEAAIDSGIVKDASTAEAWIKDVFLGVFARSEAPLWLLSYKAWAKNDVDSVHNLNDYFLASRETSELRSETEQMGWSLLQIAQSLGWGGECLTQLSAIKPLSLLTAHSYASFYLNIQAKNGLAAYAFSWIENQVAASLKAIPLGQVAGQQALTKIRLLVPEMVHEAEQRANSGLSMVDNFSPMLAILSSRHETQYSRLFRS.

This sequence belongs to the UreF family. In terms of assembly, ureD, UreF and UreG form a complex that acts as a GTP-hydrolysis-dependent molecular chaperone, activating the urease apoprotein by helping to assemble the nickel containing metallocenter of UreC. The UreE protein probably delivers the nickel.

The protein resides in the cytoplasm. In terms of biological role, required for maturation of urease via the functional incorporation of the urease nickel metallocenter. The protein is Urease accessory protein UreF of Polynucleobacter asymbioticus (strain DSM 18221 / CIP 109841 / QLW-P1DMWA-1) (Polynucleobacter necessarius subsp. asymbioticus).